A 374-amino-acid polypeptide reads, in one-letter code: MKKISKAGLGLALVCALATIGGNAARRATAQRRGSGVFYDEMFDFDIDAHLAKHAPHLHKHSEEISHWAGYSGISRSVDRADGAAERAVTPSARRIVRSASWRAPTASARRPARSRWRCASRCTSAIPTRQGAGDAGPRQSAAGAVRAFRRQRAGGRAARRRRVPAGLRPPVQRTAPGQGGFGPLRQGRPGRAAVSPNGLLQFPFPRGASWHVGGAHTNTGSGNYPMSSLDMSRGGGWGSNQNGNWVSASAAGSFKRHSSCFAEIVHTGGWSTTYYHLMNIQYNTGANVSMNTAIANPANTQAQALCNGGQSTGPHEHWSLKQNGSFYHLNGTYLSGYRITATGSSYDTNCSRFYLTKNGQNYCYGYYVNPGPN.

The signal sequence occupies residues 1-24; sequence MKKISKAGLGLALVCALATIGGNA. The propeptide occupies 25–195; the sequence is ARRATAQRRG…RQGRPGRAAV (171 aa). Residues 128 to 187 form a disordered region; it reads PTRQGAGDAGPRQSAAGAVRAFRRQRAGGRAARRRRVPAGLRPPVQRTAPGQGGFGPLRQ. The span at 148–164 shows a compositional bias: basic residues; sequence AFRRQRAGGRAARRRRV. Cysteine 261 and cysteine 307 are oxidised to a cystine. Residues histidine 316 and histidine 318 each coordinate Zn(2+). Cysteines 351 and 364 form a disulfide.

Belongs to the peptidase M23A family. The cofactor is Zn(2+).

Its subcellular location is the secreted. It catalyses the reaction Cleavage of N-acetylmuramoyl-|-Ala, and of the insulin B chain at 23-Gly-|-Phe-24 &gt; 18-Val-|-Cys(SO3H).. This chain is Beta-lytic metalloendopeptidase, found in Achromobacter lyticus.